An 874-amino-acid chain; its full sequence is Probable inorganic carbon transporter subunit DabA (874 aa).

Residues Cys398, Asp400, His580, and Cys595 each coordinate Zn(2+).

This sequence belongs to the inorganic carbon transporter (TC 9.A.2) DabA family. In terms of assembly, forms a complex with DabB. Requires Zn(2+) as cofactor.

It localises to the cell membrane. Its function is as follows. Part of an energy-coupled inorganic carbon pump. In Bacillus cereus (strain 03BB102), this protein is Probable inorganic carbon transporter subunit DabA.